Here is a 136-residue protein sequence, read N- to C-terminus: Small ribosomal subunit protein uS11c (136 aa).

Belongs to the universal ribosomal protein uS11 family. As to quaternary structure, part of the 30S ribosomal subunit.

It is found in the plastid. The protein resides in the chloroplast. The polypeptide is Small ribosomal subunit protein uS11c (Guizotia abyssinica (Niger)).